A 455-amino-acid chain; its full sequence is Protein 60A (455 aa).

Residues 1-36 (MSGLRNTSEAVAVLASLGLGMVLLMFVATTPPAVEA) form the signal peptide. Positions 37 to 335 (TQSGIYIDNG…SASHPRKRKK (299 aa)) are excised as a propeptide. Residues 108 to 118 (GLSDQDEDDDY) are compositionally biased toward acidic residues. The interval 108 to 138 (GLSDQDEDDDYERGHRSRRSADLEEDEGEQQ) is disordered. Asparagine 238 and asparagine 250 each carry an N-linked (GlcNAc...) asparagine glycan. The tract at residues 316 to 345 (AHSSHHRSKRSASHPRKRKKSVSPNNVPLL) is disordered. A compositionally biased stretch (basic residues) spans 318 to 336 (SSHHRSKRSASHPRKRKKS). 3 cysteine pairs are disulfide-bonded: cysteine 354–cysteine 420, cysteine 383–cysteine 452, and cysteine 387–cysteine 454. N-linked (GlcNAc...) asparagine glycosylation is present at asparagine 396.

It belongs to the TGF-beta family. As to quaternary structure, homodimer; disulfide-linked. Interacts with nord and dpp. In terms of tissue distribution, expressed in cells of the developing foregut and hindgut during germ band retraction and later embryonic stages. Expressed in the wing disk, mainly in the posterior compartment in the pteropleural and medial regions extending into the progenitors of the scutellum. High levels are found within the posterior and anterior compartments of the wing pouch and low levels in the hinge region. In the eye/antennal disk, expression is highest anterior to the morphogenetic furrow and in the medial regions with lower levels of expression posterior to the morphogenetic furrow. Expressed throughout the posterior compartment of the leg imaginal disks and within the ventral anterior compartment.

The protein localises to the secreted. Functionally, required for the growth of imaginal tissues and for patterning of the adult wing. This chain is Protein 60A (gbb), found in Drosophila melanogaster (Fruit fly).